The sequence spans 293 residues: Undecaprenyl-diphosphatase (293 aa).

8 helical membrane-spanning segments follow: residues Ile3–Pro23, Lys43–Phe63, Val85–Ile105, Leu109–Ala129, Phe178–Gly198, Val203–Glu223, Ile238–Leu258, and Phe269–Ile289.

Belongs to the UppP family.

It localises to the cell inner membrane. The catalysed reaction is di-trans,octa-cis-undecaprenyl diphosphate + H2O = di-trans,octa-cis-undecaprenyl phosphate + phosphate + H(+). Catalyzes the dephosphorylation of undecaprenyl diphosphate (UPP). Confers resistance to bacitracin. The protein is Undecaprenyl-diphosphatase of Cupriavidus metallidurans (strain ATCC 43123 / DSM 2839 / NBRC 102507 / CH34) (Ralstonia metallidurans).